The primary structure comprises 300 residues: Cation-efflux pump FieF (300 aa).

The next 4 membrane-spanning stretches (helical) occupy residues 12-32 (AALA…FAWW), 39-59 (ILAA…NLLV), 82-102 (AALA…LTGI), and 114-134 (PLVG…LVTF). Zn(2+) is bound by residues Asp-45 and Asp-49. Residues His-153 and Asp-157 each coordinate Zn(2+). The next 2 membrane-spanning stretches (helical) occupy residues 156 to 176 (SDVM…YGLH) and 182 to 202 (FALG…YEAI).

Belongs to the cation diffusion facilitator (CDF) transporter (TC 2.A.4) family. FieF subfamily. Homodimer.

It is found in the cell inner membrane. The enzyme catalyses Zn(2+)(in) + H(+)(out) = Zn(2+)(out) + H(+)(in). It carries out the reaction Cd(2+)(in) + H(+)(out) = Cd(2+)(out) + H(+)(in). It catalyses the reaction Fe(2+)(in) + H(+)(out) = Fe(2+)(out) + H(+)(in). Its function is as follows. Divalent metal cation transporter which exports Zn(2+), Cd(2+) and possibly Fe(2+). May be involved in zinc and iron detoxification by efflux. The chain is Cation-efflux pump FieF from Cronobacter sakazakii (strain ATCC BAA-894) (Enterobacter sakazakii).